The chain runs to 268 residues: Tryptophan synthase alpha chain (268 aa).

Catalysis depends on proton acceptor residues Glu-49 and Asp-60.

Belongs to the TrpA family. As to quaternary structure, tetramer of two alpha and two beta chains.

The catalysed reaction is (1S,2R)-1-C-(indol-3-yl)glycerol 3-phosphate + L-serine = D-glyceraldehyde 3-phosphate + L-tryptophan + H2O. It participates in amino-acid biosynthesis; L-tryptophan biosynthesis; L-tryptophan from chorismate: step 5/5. The alpha subunit is responsible for the aldol cleavage of indoleglycerol phosphate to indole and glyceraldehyde 3-phosphate. This chain is Tryptophan synthase alpha chain, found in Shigella boydii serotype 4 (strain Sb227).